We begin with the raw amino-acid sequence, 595 residues long: Beta-(1--&gt;2)glucan export ATP-binding/permease protein NdvA (595 aa).

The region spanning 21–301 is the ABC transmembrane type-1 domain; that stretch reads SLLICAANVM…MSNFINLTVS (281 aa). 5 helical membrane passes run 22–42, 55–75, 128–148, 152–172, and 248–268; these read LLIC…PILF, IILT…AYVL, AIWL…FILI, FNMN…YVLI, and TAST…VAKG. Positions 335–569 constitute an ABC transporter domain; it reads VQFHHVTYKF…GGRFYKLLKA (235 aa). Residue 368–375 coordinates ATP; that stretch reads GPTGAGKT.

Belongs to the ABC transporter superfamily. Beta-(1--&gt;2)glucan exporter (TC 3.A.1.108.1) family. Homodimer.

It is found in the cell inner membrane. The catalysed reaction is [(1-&gt;2)-beta-D-glucosyl](n)(in) + ATP + H2O = [(1-&gt;2)-beta-D-glucosyl](n)(out) + ADP + phosphate + H(+). Its function is as follows. Involved in beta-(1--&gt;2)glucan export. Transmembrane domains (TMD) form a pore in the inner membrane and the ATP-binding domain (NBD) is responsible for energy generation. In Bartonella quintana (strain Toulouse) (Rochalimaea quintana), this protein is Beta-(1--&gt;2)glucan export ATP-binding/permease protein NdvA.